We begin with the raw amino-acid sequence, 20 residues long: Small ribosomal subunit protein bS20 (20 aa).

A disordered region spans residues 1–20 (ANNPGARKAIRKIEARTEVN). Residues 11–20 (RKIEARTEVN) are compositionally biased toward basic and acidic residues.

This sequence belongs to the bacterial ribosomal protein bS20 family.

In terms of biological role, binds directly to 16S ribosomal RNA. The polypeptide is Small ribosomal subunit protein bS20 (rpsT) (Brevundimonas vesicularis (Pseudomonas vesicularis)).